Here is a 63-residue protein sequence, read N- to C-terminus: Cecropin-C (63 aa).

Positions 1–23 are cleaved as a signal peptide; sequence MNFYKIFVFVALILAISIGQSEA. Arginine 62 carries the arginine amide modification.

Belongs to the cecropin family.

The protein localises to the secreted. Functionally, cecropins have lytic and antibacterial activity against several Gram-positive and Gram-negative bacteria. The polypeptide is Cecropin-C (CecC) (Drosophila mauritiana (Fruit fly)).